The chain runs to 476 residues: Carbamoyl phosphate synthase arginine-specific small chain (476 aa).

A mitochondrion-targeting transit peptide spans 1–24 (MFSHLLKPAARSAGLLGHVNRRYL). The Glutamine amidotransferase type-1 domain maps to 228–415 (HVALIDCGVK…IQNVQRYKDH (188 aa)). Residue C304 is the Nucleophile of the active site. Catalysis depends on residues H388 and E390.

The protein belongs to the CarA family. In terms of assembly, heterodimer composed of 2 chains; the small (or glutamine) chain promotes the hydrolysis of glutamine to ammonia, which is used by the large (or ammonia) chain to synthesize carbamoyl phosphate.

Its subcellular location is the mitochondrion matrix. The enzyme catalyses hydrogencarbonate + L-glutamine + 2 ATP + H2O = carbamoyl phosphate + L-glutamate + 2 ADP + phosphate + 2 H(+). It catalyses the reaction L-glutamine + H2O = L-glutamate + NH4(+). The protein operates within amino-acid biosynthesis; L-arginine biosynthesis; carbamoyl phosphate from bicarbonate: step 1/1. In terms of biological role, small subunit of the arginine-specific carbamoyl phosphate synthase (CPSase). CPSase catalyzes the formation of carbamoyl phosphate from the ammonia moiety of glutamine, carbonate, and phosphate donated by ATP, the first step of the arginine biosynthetic pathway. The small subunit (glutamine amidotransferase) binds and cleaves glutamine to supply the large subunit with the substrate ammonia. The protein is Carbamoyl phosphate synthase arginine-specific small chain (CPA1) of Phaeosphaeria nodorum (strain SN15 / ATCC MYA-4574 / FGSC 10173) (Glume blotch fungus).